The following is a 1645-amino-acid chain: Outer membrane protein B (1645 aa).

A propeptide spanning residues 1329-1352 is cleaved from the precursor; the sequence is GALRYLSNSETADVGGSETGAVSS. The region spanning 1357–1645 is the Autotransporter domain; the sequence is IDQVSYGVWA…QGTLKVRINF (289 aa).

Belongs to the rickettsiae OmpA/OmpB family.

It localises to the periplasm. It is found in the secreted. The protein localises to the cell surface. Its subcellular location is the cell outer membrane. The 120 kDa surface-exposed protein is a major structural protein which may play a role as a rickettsial virulence factor and/or immunogen during infection. Its function is as follows. The 32 kDa beta peptide may serve as a membrane anchor. The chain is Outer membrane protein B (ompB) from Rickettsia typhi (strain ATCC VR-144 / Wilmington).